The sequence spans 108 residues: Parvalbumin beta 2 (108 aa).

Serine 2 carries the N-acetylserine modification. 2 EF-hand domains span residues lysine 38–serine 73 and leucine 77–glycine 108. 11 residues coordinate Ca(2+): aspartate 51, aspartate 53, serine 55, phenylalanine 57, glutamate 59, glutamate 62, aspartate 90, aspartate 92, aspartate 94, methionine 96, and glutamate 101.

This sequence belongs to the parvalbumin family.

In muscle, parvalbumin is thought to be involved in relaxation after contraction. It binds two calcium ions. The chain is Parvalbumin beta 2 from Salmo salar (Atlantic salmon).